The following is a 47-amino-acid chain: Large ribosomal subunit protein bL34 (47 aa).

Residues 1 to 28 (MAKGKRTFQPNNRRRARVHGFRTRMRTR) are disordered.

Belongs to the bacterial ribosomal protein bL34 family.

This chain is Large ribosomal subunit protein bL34, found in Corynebacterium efficiens (strain DSM 44549 / YS-314 / AJ 12310 / JCM 11189 / NBRC 100395).